The following is a 362-amino-acid chain: Hepatic sodium/bile acid cotransporter (362 aa).

Topologically, residues 1 to 22 (MEVHNVSAPFNFSLPPGFGHRA) are extracellular. 2 N-linked (GlcNAc...) asparagine glycosylation sites follow: N5 and N11. Residues 23-44 (TDKALSIILVLMLLLIMLSLGC) form a helical membrane-spanning segment. Residues 45–47 (TME) are Cytoplasmic-facing. The chain crosses the membrane as a helical span at residues 48–83 (FSKIKAHLWKPKGVIVALVAQFGIMPLAAFLLGKIF). The Extracellular segment spans residues 84–86 (HLS). The chain crosses the membrane as a discontinuously helical span at residues 87 to 112 (NIEALAILICGCSPGGNLSNLFTLAM). At 113–115 (KGD) the chain is on the cytoplasmic side. Residues 116–142 (MNLSIVMTTCSSFSALGMMPLLLYVYS) form a helical membrane-spanning segment. Residues 143-156 (KGIYDGDLKDKVPY) lie on the Extracellular side of the membrane. The chain crosses the membrane as a helical span at residues 157-179 (KGIMISLVIVLIPCTIGIVLKSK). The Cytoplasmic portion of the chain corresponds to 180 to 183 (RPHY). The helical transmembrane segment at 184–217 (VPYILKGGMIITFLLSVAVTALSVINVGNSIMFV) threads the bilayer. Residues 218 to 219 (MT) are Extracellular-facing. The chain crosses the membrane as a helical span at residues 220-243 (PHLLATSSLMPFSGFLMGYILSAL). Topologically, residues 244-247 (FQLN) are cytoplasmic. A discontinuously helical membrane pass occupies residues 248–273 (PSCRRTISMETGFQNIQLCSTILNVT). Over 274–280 (FPPEVIG) the chain is Extracellular. A helical membrane pass occupies residues 281–311 (PLFFFPLLYMIFQLAEGLLIIIIFRCYEKIK). Residues 312–362 (PPKDQTKITYKAAATEDATPAALEKGTHNGNIPPLQPGPSPNGLNSGQMAN) are Cytoplasmic-facing. T330 bears the Phosphothreonine mark. The disordered stretch occupies residues 333–362 (ALEKGTHNGNIPPLQPGPSPNGLNSGQMAN). The span at 353-362 (NGLNSGQMAN) shows a compositional bias: polar residues.

It belongs to the bile acid:sodium symporter (BASS) (TC 2.A.28) family. In terms of tissue distribution, highly expressed in liver and low expression in kidney.

It is found in the cell membrane. It carries out the reaction taurocholate(out) + 2 Na(+)(out) = taurocholate(in) + 2 Na(+)(in). The catalysed reaction is taurochenodeoxycholate(out) + 2 Na(+)(out) = taurochenodeoxycholate(in) + 2 Na(+)(in). It catalyses the reaction tauroursodeoxycholate(out) + 2 Na(+)(out) = tauroursodeoxycholate(in) + 2 Na(+)(in). The enzyme catalyses glycocholate(out) + 2 Na(+)(out) = glycocholate(in) + 2 Na(+)(in). It carries out the reaction estrone 3-sulfate(out) + 2 Na(+)(out) = estrone 3-sulfate(in) + 2 Na(+)(in). The catalysed reaction is cholate(out) + 2 Na(+)(out) = cholate(in) + 2 Na(+)(in). It catalyses the reaction tauronorcholate(out) + 2 Na(+)(out) = tauronorcholate(in) + 2 Na(+)(in). The enzyme catalyses taurodeoxycholate(out) + 2 Na(+)(out) = taurodeoxycholate(in) + 2 Na(+)(in). It carries out the reaction tauroallocholate(out) + 2 Na(+)(out) = tauroallocholate(in) + 2 Na(+)(in). The catalysed reaction is taurohyodeoxycholate(out) + 2 Na(+)(out) = taurohyodeoxycholate(in) + 2 Na(+)(in). It catalyses the reaction taurohyocholate(out) + 2 Na(+)(out) = taurohyocholate(in) + 2 Na(+)(in). The enzyme catalyses tauro-beta-muricholate(out) + 2 Na(+)(out) = tauro-beta-muricholate(in) + 2 Na(+)(in). With respect to regulation, the transport of bile acids is sodium-dependent. Functionally, as a major transporter of conjugated bile salts from plasma into the hepatocyte, it plays a key role in the enterohepatic circulation of bile salts necessary for the solubilization and absorption of dietary fat and fat-soluble vitamins. It is strictly dependent on the extracellular presence of sodium. It exhibits broad substrate specificity and transports various bile acids, such as taurocholate, cholate, as well as non-bile acid organic compounds, such as estrone sulfate. Works collaboratively with the ileal transporter (NTCP2), the organic solute transporter (OST), and the bile salt export pump (BSEP), to ensure efficacious biological recycling of bile acids during enterohepatic circulation. In Rattus norvegicus (Rat), this protein is Hepatic sodium/bile acid cotransporter (Slc10a1).